A 188-amino-acid polypeptide reads, in one-letter code: dCTP deaminase (188 aa).

DCTP-binding positions include 111–116, 135–137, Gln156, Tyr170, and Gln180; these read KSTYAR and TLE. Catalysis depends on Glu137, which acts as the Proton donor/acceptor.

It belongs to the dCTP deaminase family. In terms of assembly, homotrimer.

It catalyses the reaction dCTP + H2O + H(+) = dUTP + NH4(+). Its pathway is pyrimidine metabolism; dUMP biosynthesis; dUMP from dCTP (dUTP route): step 1/2. Its function is as follows. Catalyzes the deamination of dCTP to dUTP. The protein is dCTP deaminase of Chromohalobacter salexigens (strain ATCC BAA-138 / DSM 3043 / CIP 106854 / NCIMB 13768 / 1H11).